The chain runs to 252 residues: Clc-like protein 2 (252 aa).

The next 4 membrane-spanning stretches (helical) occupy residues 7-29 (YAILVLTIIAFLLTAAALCTPAW), 91-111 (LFHIYLISQAFAMLSLISFCV), 127-147 (VFLVLAAVIAFGCLIAFAVYS), and 173-193 (IALTGAFVYLVAIILSVVHVL).

It belongs to the Clc family.

The protein resides in the membrane. The polypeptide is Clc-like protein 2 (clc-2) (Caenorhabditis elegans).